The sequence spans 339 residues: Biotin synthase (339 aa).

Residues 55–282 form the Radical SAM core domain; the sequence is NAVQLSTLLS…KAVVRLSAGR (228 aa). The [4Fe-4S] cluster site is built by cysteine 70, cysteine 74, and cysteine 77. Positions 114, 145, 205, and 277 each coordinate [2Fe-2S] cluster.

It belongs to the radical SAM superfamily. Biotin synthase family. As to quaternary structure, homodimer. It depends on [4Fe-4S] cluster as a cofactor. [2Fe-2S] cluster is required as a cofactor.

It catalyses the reaction (4R,5S)-dethiobiotin + (sulfur carrier)-SH + 2 reduced [2Fe-2S]-[ferredoxin] + 2 S-adenosyl-L-methionine = (sulfur carrier)-H + biotin + 2 5'-deoxyadenosine + 2 L-methionine + 2 oxidized [2Fe-2S]-[ferredoxin]. Its pathway is cofactor biosynthesis; biotin biosynthesis; biotin from 7,8-diaminononanoate: step 2/2. Catalyzes the conversion of dethiobiotin (DTB) to biotin by the insertion of a sulfur atom into dethiobiotin via a radical-based mechanism. This chain is Biotin synthase, found in Burkholderia orbicola (strain MC0-3).